The primary structure comprises 257 residues: 5'-nucleotidase SurE (257 aa).

Positions 8, 9, 40, and 97 each coordinate a divalent metal cation.

This sequence belongs to the SurE nucleotidase family. A divalent metal cation is required as a cofactor.

The protein resides in the cytoplasm. It carries out the reaction a ribonucleoside 5'-phosphate + H2O = a ribonucleoside + phosphate. In terms of biological role, nucleotidase that shows phosphatase activity on nucleoside 5'-monophosphates. This chain is 5'-nucleotidase SurE, found in Desulforudis audaxviator (strain MP104C).